Here is a 99-residue protein sequence, read N- to C-terminus: Large ribosomal subunit protein uL23 (99 aa).

The protein belongs to the universal ribosomal protein uL23 family. Part of the 50S ribosomal subunit. Contacts protein L29, and trigger factor when it is bound to the ribosome.

Functionally, one of the early assembly proteins it binds 23S rRNA. One of the proteins that surrounds the polypeptide exit tunnel on the outside of the ribosome. Forms the main docking site for trigger factor binding to the ribosome. The chain is Large ribosomal subunit protein uL23 from Xanthomonas campestris pv. campestris (strain B100).